Reading from the N-terminus, the 883-residue chain is Phosphoenolpyruvate carboxylase (883 aa).

Active-site residues include His138 and Lys546.

The protein belongs to the PEPCase type 1 family. Mg(2+) is required as a cofactor.

It carries out the reaction oxaloacetate + phosphate = phosphoenolpyruvate + hydrogencarbonate. Functionally, forms oxaloacetate, a four-carbon dicarboxylic acid source for the tricarboxylic acid cycle. The sequence is that of Phosphoenolpyruvate carboxylase from Escherichia fergusonii (strain ATCC 35469 / DSM 13698 / CCUG 18766 / IAM 14443 / JCM 21226 / LMG 7866 / NBRC 102419 / NCTC 12128 / CDC 0568-73).